The following is a 263-amino-acid chain: MWELRSASFWRAICAEFFASLFYVFFGLGASLRWAPGPLHVLQVALAFGLALATLVQAVGHISGAHVNPAVTFAFLVGSQMSLLRAICYMVAQLLGAVAGAAVLYSVTPPAVRGNLALNTLHPGVSVGQATIVEIFLTLQFVLCIFATYDERRNGRLGSVALAVGFSLTLGHLFGMYYTGAGMNPARSFAPAILTRNFTNHWVYWVGPVIGAGLGSLLYDFLLFPRLKSVSERLSILKGSRPSESNGQPEVTGEPVELKTQAL.

Residues 1–9 (MWELRSASF) are Cytoplasmic-facing. A helical membrane pass occupies residues 10–29 (WRAICAEFFASLFYVFFGLG). Topologically, residues 30 to 41 (ASLRWAPGPLHV) are extracellular. The helical transmembrane segment at 42–59 (LQVALAFGLALATLVQAV) threads the bilayer. At 60 to 61 (GH) the chain is on the cytoplasmic side. Residues 62 to 77 (ISGAHVNPAVTFAFLV) constitute an intramembrane region (discontinuously helical). The NPA 1 motif lies at 68–70 (NPA). Residues 78–82 (GSQMS) lie on the Cytoplasmic side of the membrane. A helical membrane pass occupies residues 83–106 (LLRAICYMVAQLLGAVAGAAVLYS). Residues 107 to 127 (VTPPAVRGNLALNTLHPGVSV) are Extracellular-facing. Residues 128-148 (GQATIVEIFLTLQFVLCIFAT) form a helical membrane-spanning segment. Over 149–156 (YDERRNGR) the chain is Cytoplasmic. The helical transmembrane segment at 157–175 (LGSVALAVGFSLTLGHLFG) threads the bilayer. Topologically, residues 176-178 (MYY) are extracellular. The discontinuously helical intramembrane region spans 179–193 (TGAGMNPARSFAPAI). An NPA 2 motif is present at residues 184 to 186 (NPA). The Extracellular portion of the chain corresponds to 194–200 (LTRNFTN). A helical membrane pass occupies residues 201–222 (HWVYWVGPVIGAGLGSLLYDFL). At 223-263 (LFPRLKSVSERLSILKGSRPSESNGQPEVTGEPVELKTQAL) the chain is on the cytoplasmic side. Residues 227-237 (LKSVSERLSIL) form an interaction with CALM region. Serine 235 bears the Phosphoserine mark. A disordered region spans residues 239 to 263 (GSRPSESNGQPEVTGEPVELKTQAL). Serine 243 is subject to Phosphoserine; by PKA. Serine 245 is subject to Phosphoserine. Position 246 is a deamidated asparagine (asparagine 246).

It belongs to the MIP/aquaporin (TC 1.A.8) family. In terms of assembly, homotetramer; each monomer provides an independent water pore. Two homotetramers on opposing membranes can dimerize, forming a cell-cell junction. Interacts with CALM; the calcium-calmodulin/CALM complex interacts with the cytoplasmic domains of two aquaporins, leading to channel closure. Interacts with BFSP1 (via C-terminus); prevents calcium-dependent inhibition of the water channel activity. Fatty acylated at Met-1 and Lys-238. The acyl modifications, in decreasing order of ion abundance, are: oleoyl (C18:1) &gt; palmitoyl (C16:0) &gt; stearoyl (C18:0) &gt; eicosenoyl (C20:1) &gt; dihomo-gamma-linolenoyl (C20:3) &gt; palmitoleoyl (C16:1) &gt; eicosadienoyl (C20:2). In terms of processing, subject to partial proteolytic cleavage in the eye lens core. Partial proteolysis promotes interactions between tetramers from adjoining membranes. As to expression, major component of lens fiber junctions.

It is found in the cell membrane. The protein resides in the cell junction. It catalyses the reaction H2O(in) = H2O(out). With respect to regulation, the water channel activity is inhibited by calcium through calmodulin/CALM. Its function is as follows. Aquaporins form homotetrameric transmembrane channels, with each monomer independently mediating water transport across the plasma membrane along its osmotic gradient. Specifically expressed in lens fiber cells, this aquaporin is crucial for maintaining lens water homeostasis and transparency. Beyond water permeability, it also acts as a cell-to-cell adhesion molecule, forming thin junctions between lens fiber cells that are essential for maintaining the ordered structure and transparency of the lens. The protein is Lens fiber major intrinsic protein of Bos taurus (Bovine).